Reading from the N-terminus, the 618-residue chain is DNA mismatch repair protein MutL (618 aa).

The segment covering 366-378 (AEPTAAREPATPR) has biased composition (low complexity). A disordered region spans residues 366–403 (AEPTAAREPATPRYSDGASGGNGGRQSAGGWPHAQPGY). Gly residues predominate over residues 383–392 (ASGGNGGRQS).

It belongs to the DNA mismatch repair MutL/HexB family.

Functionally, this protein is involved in the repair of mismatches in DNA. It is required for dam-dependent methyl-directed DNA mismatch repair. May act as a 'molecular matchmaker', a protein that promotes the formation of a stable complex between two or more DNA-binding proteins in an ATP-dependent manner without itself being part of a final effector complex. The chain is DNA mismatch repair protein MutL from Salmonella typhi.